The following is a 197-amino-acid chain: dTTP/UTP pyrophosphatase (197 aa).

The active-site Proton acceptor is D70.

This sequence belongs to the Maf family. YhdE subfamily. The cofactor is a divalent metal cation.

The protein resides in the cytoplasm. It carries out the reaction dTTP + H2O = dTMP + diphosphate + H(+). The catalysed reaction is UTP + H2O = UMP + diphosphate + H(+). Its function is as follows. Nucleoside triphosphate pyrophosphatase that hydrolyzes dTTP and UTP. May have a dual role in cell division arrest and in preventing the incorporation of modified nucleotides into cellular nucleic acids. The sequence is that of dTTP/UTP pyrophosphatase from Yersinia pestis bv. Antiqua (strain Antiqua).